A 268-amino-acid chain; its full sequence is Phosphatidylcholine synthase (268 aa).

At 1-27 (MAARKAAKKLTDRIPRPKKKVTWPQAR) the chain is on the cytoplasmic side. The chain crosses the membrane as a helical span at residues 28-48 (AFSVHLLTASGSFLAFLSLVA). The Periplasmic portion of the chain corresponds to 49 to 53 (ASEER). Residues 54–74 (WTAMFWWLGLALFVDGIDGPI) traverse the membrane as a helical segment. Residues 75 to 88 (ARKLEVKEILPTWS) are Cytoplasmic-facing. A helical membrane pass occupies residues 89-109 (GELLDNIIDYVTYVLIPAFAL). Over 110–112 (YQR) the chain is Periplasmic. Residues 113-133 (GFMGEGLSFLSAAIIVVSSAI) form a helical membrane-spanning segment. The Cytoplasmic portion of the chain corresponds to 134 to 145 (YYADTGMKTKEN). A helical membrane pass occupies residues 146–166 (FFKGFPVVWNMVVFTLFVIEP). The Periplasmic segment spans residues 167 to 168 (GQ). A helical membrane pass occupies residues 169 to 189 (WVSFAVVVVAGILTFVPINFI). The Cytoplasmic portion of the chain corresponds to 190–203 (HPVRVVRLRPFNLT). A helical membrane pass occupies residues 204 to 224 (MTLLWCAFGALALAQAALAAF). Residues 225–240 (YDQIGVLGAQVSTFIK) lie on the Periplasmic side of the membrane. The chain crosses the membrane as a helical span at residues 241 to 261 (IGITITGLYLACIGGIMQFFP). The Cytoplasmic segment spans residues 262–268 (NLGAKKA).

Belongs to the CDP-alcohol phosphatidyltransferase class-I family. Mn(2+) is required as a cofactor.

The protein resides in the cell inner membrane. The catalysed reaction is a CDP-1,2-diacyl-sn-glycerol + choline = a 1,2-diacyl-sn-glycero-3-phosphocholine + CMP + H(+). Condenses choline with CDP-diglyceride to produce phosphatidylcholine and CMP. The protein is Phosphatidylcholine synthase (pcs) of Mesorhizobium japonicum (strain LMG 29417 / CECT 9101 / MAFF 303099) (Mesorhizobium loti (strain MAFF 303099)).